The sequence spans 128 residues: Aspartate 1-decarboxylase (128 aa).

Catalysis depends on Ser-25, which acts as the Schiff-base intermediate with substrate; via pyruvic acid. Ser-25 is modified (pyruvic acid (Ser)). Thr-57 contacts substrate. The active-site Proton donor is the Tyr-58. 73–75 (GSA) is a substrate binding site.

Belongs to the PanD family. Heterooctamer of four alpha and four beta subunits. Pyruvate serves as cofactor. Post-translationally, is synthesized initially as an inactive proenzyme, which is activated by self-cleavage at a specific serine bond to produce a beta-subunit with a hydroxyl group at its C-terminus and an alpha-subunit with a pyruvoyl group at its N-terminus.

The protein resides in the cytoplasm. The catalysed reaction is L-aspartate + H(+) = beta-alanine + CO2. It participates in cofactor biosynthesis; (R)-pantothenate biosynthesis; beta-alanine from L-aspartate: step 1/1. Functionally, catalyzes the pyruvoyl-dependent decarboxylation of aspartate to produce beta-alanine. The protein is Aspartate 1-decarboxylase of Burkholderia vietnamiensis (strain G4 / LMG 22486) (Burkholderia cepacia (strain R1808)).